The following is a 290-amino-acid chain: ATP synthase gamma chain (290 aa).

The protein belongs to the ATPase gamma chain family. In terms of assembly, F-type ATPases have 2 components, CF(1) - the catalytic core - and CF(0) - the membrane proton channel. CF(1) has five subunits: alpha(3), beta(3), gamma(1), delta(1), epsilon(1). CF(0) has three main subunits: a, b and c.

It localises to the cell membrane. Produces ATP from ADP in the presence of a proton gradient across the membrane. The gamma chain is believed to be important in regulating ATPase activity and the flow of protons through the CF(0) complex. The chain is ATP synthase gamma chain from Buchnera aphidicola subsp. Acyrthosiphon pisum (strain 5A).